Consider the following 88-residue polypeptide: uncharacterized protein (88 aa).

This is an uncharacterized protein from Lymantria dispar multicapsid nuclear polyhedrosis virus (LdMNPV).